The following is a 492-amino-acid chain: Bifunctional protein GlmU (492 aa).

Positions 1 to 238 (MRDAAVVILA…AALVAGVNDR (238 aa)) are pyrophosphorylase. UDP-N-acetyl-alpha-D-glucosamine contacts are provided by residues 9-12 (LAAG), Lys23, Gln80, and 85-86 (GT). Asp111 lines the Mg(2+) pocket. Positions 148, 163, 178, and 236 each coordinate UDP-N-acetyl-alpha-D-glucosamine. A Mg(2+)-binding site is contributed by Asn236. Residues 239–259 (VQLADLAAVLNRRIVEGHQRA) form a linker region. An N-acetyltransferase region spans residues 260-492 (GVTIIDPAST…EDQGPEATGE (233 aa)). Residues Arg341 and Lys359 each coordinate UDP-N-acetyl-alpha-D-glucosamine. Residue His371 is the Proton acceptor of the active site. Residues Tyr374 and Asn385 each coordinate UDP-N-acetyl-alpha-D-glucosamine. Acetyl-CoA is bound by residues Ala388, 394–395 (NY), Ser413, and Ala431. Over residues 469–483 (EAAAAAGAGAGAAAE) the composition is skewed to low complexity. The tract at residues 469 to 492 (EAAAAAGAGAGAAAEDQGPEATGE) is disordered.

The protein in the N-terminal section; belongs to the N-acetylglucosamine-1-phosphate uridyltransferase family. In the C-terminal section; belongs to the transferase hexapeptide repeat family. In terms of assembly, homotrimer. Mg(2+) is required as a cofactor.

Its subcellular location is the cytoplasm. It catalyses the reaction alpha-D-glucosamine 1-phosphate + acetyl-CoA = N-acetyl-alpha-D-glucosamine 1-phosphate + CoA + H(+). The catalysed reaction is N-acetyl-alpha-D-glucosamine 1-phosphate + UTP + H(+) = UDP-N-acetyl-alpha-D-glucosamine + diphosphate. It participates in nucleotide-sugar biosynthesis; UDP-N-acetyl-alpha-D-glucosamine biosynthesis; N-acetyl-alpha-D-glucosamine 1-phosphate from alpha-D-glucosamine 6-phosphate (route II): step 2/2. The protein operates within nucleotide-sugar biosynthesis; UDP-N-acetyl-alpha-D-glucosamine biosynthesis; UDP-N-acetyl-alpha-D-glucosamine from N-acetyl-alpha-D-glucosamine 1-phosphate: step 1/1. It functions in the pathway bacterial outer membrane biogenesis; LPS lipid A biosynthesis. Catalyzes the last two sequential reactions in the de novo biosynthetic pathway for UDP-N-acetylglucosamine (UDP-GlcNAc). The C-terminal domain catalyzes the transfer of acetyl group from acetyl coenzyme A to glucosamine-1-phosphate (GlcN-1-P) to produce N-acetylglucosamine-1-phosphate (GlcNAc-1-P), which is converted into UDP-GlcNAc by the transfer of uridine 5-monophosphate (from uridine 5-triphosphate), a reaction catalyzed by the N-terminal domain. The polypeptide is Bifunctional protein GlmU (Mycolicibacterium vanbaalenii (strain DSM 7251 / JCM 13017 / BCRC 16820 / KCTC 9966 / NRRL B-24157 / PYR-1) (Mycobacterium vanbaalenii)).